The sequence spans 407 residues: Indoleamine 2,3-dioxygenase 2 (407 aa).

Histidine 347 contacts heme.

The protein belongs to the indoleamine 2,3-dioxygenase family. It depends on heme as a cofactor. As to expression, detected in liver, small intestine, spleen, placenta, thymus, lung, brain, kidney, and colon. Also expressed at low level in testis and thyroid. Not expressed in the majority of human tumor samples (&gt;99%).

It carries out the reaction L-tryptophan + O2 = N-formyl-L-kynurenine. It functions in the pathway amino-acid degradation; L-tryptophan degradation via kynurenine pathway; L-kynurenine from L-tryptophan: step 1/2. Activity is inhibited by D-1MT (1-methyl-D-tryptophan) and MTH-trp (methylthiohydantoin-DL-tryptophan) but not L-1MT (1-methyl-L-tryptophan). Catalyzes the first and rate limiting step of the catabolism of the essential amino acid tryptophan along the kynurenine pathway. Involved in immune regulation. May not play a significant role in tryptophan-related tumoral resistance. In Homo sapiens (Human), this protein is Indoleamine 2,3-dioxygenase 2.